A 77-amino-acid polypeptide reads, in one-letter code: uncharacterized protein (77 aa).

This is an uncharacterized protein from Orgyia pseudotsugata multicapsid polyhedrosis virus (OpMNPV).